The sequence spans 369 residues: Anhydro-N-acetylmuramic acid kinase (369 aa).

12–19 (GTSLDGVD) contacts ATP.

The protein belongs to the anhydro-N-acetylmuramic acid kinase family.

It carries out the reaction 1,6-anhydro-N-acetyl-beta-muramate + ATP + H2O = N-acetyl-D-muramate 6-phosphate + ADP + H(+). Its pathway is amino-sugar metabolism; 1,6-anhydro-N-acetylmuramate degradation. It functions in the pathway cell wall biogenesis; peptidoglycan recycling. Functionally, catalyzes the specific phosphorylation of 1,6-anhydro-N-acetylmuramic acid (anhMurNAc) with the simultaneous cleavage of the 1,6-anhydro ring, generating MurNAc-6-P. Is required for the utilization of anhMurNAc either imported from the medium or derived from its own cell wall murein, and thus plays a role in cell wall recycling. The chain is Anhydro-N-acetylmuramic acid kinase from Shigella boydii serotype 4 (strain Sb227).